The chain runs to 291 residues: Cell division control protein 2 homolog 1 (291 aa).

The 284-residue stretch at Gly1–Phe284 folds into the Protein kinase domain. ATP is bound by residues Ile7 to Val15 and Lys30. Thr11 is modified (phosphothreonine). Tyr12 is subject to Phosphotyrosine. Asp124 acts as the Proton acceptor in catalysis. Position 158 is a phosphothreonine; by CAK (Thr158).

This sequence belongs to the protein kinase superfamily. CMGC Ser/Thr protein kinase family. CDC2/CDKX subfamily. As to expression, found in most organs including root, young leaf, stem, vegetative meristem and flower bud.

It catalyses the reaction L-seryl-[protein] + ATP = O-phospho-L-seryl-[protein] + ADP + H(+). It carries out the reaction L-threonyl-[protein] + ATP = O-phospho-L-threonyl-[protein] + ADP + H(+). The catalysed reaction is [DNA-directed RNA polymerase] + ATP = phospho-[DNA-directed RNA polymerase] + ADP + H(+). Its activity is regulated as follows. Phosphorylation at Thr-11 or Tyr-12 inactivates the enzyme, while phosphorylation at Thr-158 activates it. In terms of biological role, plays a key role in the control of the eukaryotic cell cycle. Component of the kinase complex that phosphorylates the repetitive C-terminus of RNA polymerase II. This is Cell division control protein 2 homolog 1 (CDC2A) from Medicago sativa (Alfalfa).